The chain runs to 511 residues: Exodeoxyribonuclease 7 large subunit (511 aa).

This sequence belongs to the XseA family. In terms of assembly, heterooligomer composed of large and small subunits.

The protein resides in the cytoplasm. It catalyses the reaction Exonucleolytic cleavage in either 5'- to 3'- or 3'- to 5'-direction to yield nucleoside 5'-phosphates.. Functionally, bidirectionally degrades single-stranded DNA into large acid-insoluble oligonucleotides, which are then degraded further into small acid-soluble oligonucleotides. The polypeptide is Exodeoxyribonuclease 7 large subunit (Brucella canis (strain ATCC 23365 / NCTC 10854 / RM-666)).